The chain runs to 92 residues: uncharacterized protein (92 aa).

This is an uncharacterized protein from Treponema pallidum (strain Nichols).